A 462-amino-acid polypeptide reads, in one-letter code: tRNA modification GTPase MnmE (462 aa).

3 residues coordinate (6S)-5-formyl-5,6,7,8-tetrahydrofolate: arginine 22, glutamate 87, and arginine 126. Residues 220–382 (GLKVAIVGRP…LARKVQEIVL (163 aa)) enclose the TrmE-type G domain. K(+) is bound at residue asparagine 230. Residues 230–235 (NVGKSS), 249–255 (SNIPGTT), and 274–277 (DTAG) each bind GTP. Serine 234 serves as a coordination point for Mg(2+). K(+) contacts are provided by serine 249, isoleucine 251, and threonine 254. Mg(2+) is bound at residue threonine 255. Lysine 462 provides a ligand contact to (6S)-5-formyl-5,6,7,8-tetrahydrofolate.

This sequence belongs to the TRAFAC class TrmE-Era-EngA-EngB-Septin-like GTPase superfamily. TrmE GTPase family. As to quaternary structure, homodimer. Heterotetramer of two MnmE and two MnmG subunits. K(+) is required as a cofactor.

The protein localises to the cytoplasm. Exhibits a very high intrinsic GTPase hydrolysis rate. Involved in the addition of a carboxymethylaminomethyl (cmnm) group at the wobble position (U34) of certain tRNAs, forming tRNA-cmnm(5)s(2)U34. The chain is tRNA modification GTPase MnmE from Moorella thermoacetica (strain ATCC 39073 / JCM 9320).